A 103-amino-acid chain; its full sequence is Large ribosomal subunit protein mL41 (103 aa).

Belongs to the mitochondrion-specific ribosomal protein mL41 family. In terms of assembly, component of the mitochondrial large ribosomal subunit (mt-LSU). Mature N.crassa 74S mitochondrial ribosomes consist of a small (37S) and a large (54S) subunit. The 37S small subunit contains a 16S ribosomal RNA (16S mt-rRNA) and 32 different proteins. The 54S large subunit contains a 23S rRNA (23S mt-rRNA) and 42 different proteins.

It is found in the mitochondrion. Component of the mitochondrial ribosome (mitoribosome), a dedicated translation machinery responsible for the synthesis of mitochondrial genome-encoded proteins, including at least some of the essential transmembrane subunits of the mitochondrial respiratory chain. The mitoribosomes are attached to the mitochondrial inner membrane and translation products are cotranslationally integrated into the membrane. The protein is Large ribosomal subunit protein mL41 (mrpl27) of Neurospora crassa (strain ATCC 24698 / 74-OR23-1A / CBS 708.71 / DSM 1257 / FGSC 987).